The primary structure comprises 258 residues: Glucanase inhibitor protein 3 (258 aa).

A signal peptide spans Met-1–Ala-19. In terms of domain architecture, Peptidase S1 spans Val-29–Lys-256. Residues Cys-56 and Cys-72 are joined by a disulfide bond. N-linked (GlcNAc...) asparagine glycans are attached at residues Asn-90, Asn-105, and Asn-110. 2 disulfides stabilise this stretch: Cys-180–Cys-192 and Cys-202–Cys-233.

Belongs to the peptidase S1 family. In terms of assembly, forms an apoplastic complex with host endoglucanases in tomato leaves during P.infestans infection.

The protein localises to the secreted. Secreted effector that suppresses host plant glucan elicitor-mediated defense responses. Targets host endoglucanases and inhibits the endoglucanase-mediated release of elicitor-active glucan oligosaccharides from P.infestans cell walls. This chain is Glucanase inhibitor protein 3, found in Phytophthora infestans (Potato late blight agent).